Consider the following 256-residue polypeptide: Type III pantothenate kinase (256 aa).

Position 6–13 (6–13 (DAGNSRIK)) interacts with ATP. Substrate is bound by residues Tyr90 and 97-100 (GSDR). Residue Asp99 is the Proton acceptor of the active site. Thr123 is an ATP binding site. Position 187 (Thr187) interacts with substrate.

Belongs to the type III pantothenate kinase family. As to quaternary structure, homodimer. It depends on NH4(+) as a cofactor. K(+) serves as cofactor.

It is found in the cytoplasm. It carries out the reaction (R)-pantothenate + ATP = (R)-4'-phosphopantothenate + ADP + H(+). It functions in the pathway cofactor biosynthesis; coenzyme A biosynthesis; CoA from (R)-pantothenate: step 1/5. In terms of biological role, catalyzes the phosphorylation of pantothenate (Pan), the first step in CoA biosynthesis. The sequence is that of Type III pantothenate kinase from Burkholderia mallei (strain NCTC 10247).